We begin with the raw amino-acid sequence, 294 residues long: ATP phosphoribosyltransferase (294 aa).

The protein belongs to the ATP phosphoribosyltransferase family. Long subfamily. Requires Mg(2+) as cofactor.

It is found in the cytoplasm. It carries out the reaction 1-(5-phospho-beta-D-ribosyl)-ATP + diphosphate = 5-phospho-alpha-D-ribose 1-diphosphate + ATP. Its pathway is amino-acid biosynthesis; L-histidine biosynthesis; L-histidine from 5-phospho-alpha-D-ribose 1-diphosphate: step 1/9. Feedback inhibited by histidine. Catalyzes the condensation of ATP and 5-phosphoribose 1-diphosphate to form N'-(5'-phosphoribosyl)-ATP (PR-ATP). Has a crucial role in the pathway because the rate of histidine biosynthesis seems to be controlled primarily by regulation of HisG enzymatic activity. The chain is ATP phosphoribosyltransferase from Chlorobium chlorochromatii (strain CaD3).